The primary structure comprises 360 residues: GTP 3',8-cyclase 2 (360 aa).

Residues 33–259 enclose the Radical SAM core domain; it reads TFGRVANDLR…PDPAPRGSAP (227 aa). Arg42 serves as a coordination point for GTP. 2 residues coordinate [4Fe-4S] cluster: Cys49 and Cys53. Tyr55 lines the S-adenosyl-L-methionine pocket. Cys56 is a binding site for [4Fe-4S] cluster. Arg93 contributes to the GTP binding site. Gly97 contacts S-adenosyl-L-methionine. Residue Thr124 coordinates GTP. Ser148 lines the S-adenosyl-L-methionine pocket. A GTP-binding site is contributed by Lys185. Met219 is an S-adenosyl-L-methionine binding site. Residues Cys287 and Cys290 each contribute to the [4Fe-4S] cluster site. 292–294 contacts GTP; sequence RTR. Residue Cys304 participates in [4Fe-4S] cluster binding.

It belongs to the radical SAM superfamily. MoaA family. In terms of assembly, monomer and homodimer. The cofactor is [4Fe-4S] cluster.

It catalyses the reaction GTP + AH2 + S-adenosyl-L-methionine = (8S)-3',8-cyclo-7,8-dihydroguanosine 5'-triphosphate + 5'-deoxyadenosine + L-methionine + A + H(+). It participates in cofactor biosynthesis; molybdopterin biosynthesis. Its function is as follows. Catalyzes the cyclization of GTP to (8S)-3',8-cyclo-7,8-dihydroguanosine 5'-triphosphate. This Mycobacterium bovis (strain ATCC BAA-935 / AF2122/97) protein is GTP 3',8-cyclase 2.